Consider the following 339-residue polypeptide: Small ribosomal subunit biogenesis GTPase RsgA (339 aa).

The region spanning Met-111–Phe-271 is the CP-type G domain. GTP is bound by residues Asn-159–Asp-162 and Gly-213–Ser-221. Cys-295, Cys-300, His-302, and Cys-308 together coordinate Zn(2+).

Belongs to the TRAFAC class YlqF/YawG GTPase family. RsgA subfamily. Monomer. Associates with 30S ribosomal subunit, binds 16S rRNA. Zn(2+) serves as cofactor.

Its subcellular location is the cytoplasm. One of several proteins that assist in the late maturation steps of the functional core of the 30S ribosomal subunit. Helps release RbfA from mature subunits. May play a role in the assembly of ribosomal proteins into the subunit. Circularly permuted GTPase that catalyzes slow GTP hydrolysis, GTPase activity is stimulated by the 30S ribosomal subunit. This is Small ribosomal subunit biogenesis GTPase RsgA from Pseudomonas aeruginosa (strain LESB58).